The primary structure comprises 781 residues: Transcription factor Sp3 (781 aa).

The span at 1-12 (MTAPEKPVKQEE) shows a compositional bias: basic and acidic residues. 2 disordered regions span residues 1–53 (MTAP…AAQD) and 65–88 (TCSKIGPPSPGDDEEEAAAAAGAP). Positions 20 to 31 (SGGGGGGGGGHG) are enriched in gly residues. Low complexity predominate over residues 32–53 (EYLQQQQQHGNGAVAAAAAAQD). A Phosphoserine modification is found at S73. A Glycyl lysine isopeptide (Lys-Gly) (interchain with G-Cter in SUMO) cross-link involves residue K120. The tract at residues 138–237 (QYVLPLQNLQ…IPQTGQVQVQ (100 aa)) is transactivation domain (Gln-rich). The segment at 301–338 (QAMDSSDNSERTGERVSPDINETNTDTDLFVPTSSSSQ) is disordered. Residues 308 to 317 (NSERTGERVS) show a composition bias toward basic and acidic residues. The segment covering 320-338 (INETNTDTDLFVPTSSSSQ) has biased composition (polar residues). The segment at 350–499 (QQNTNSLTTS…TPVQTLTLGQ (150 aa)) is transactivation domain (Gln-rich). A 9aaTAD motif is present at residues 461–469 (VTWQTFQVQ). The tract at residues 534–620 (IQLHPGENAD…RGTNLGKKKQ (87 aa)) is repressor domain. N6-acetyllysine; alternate is present on K551. Residue K551 forms a Glycyl lysine isopeptide (Lys-Gly) (interchain with G-Cter in SUMO); alternate linkage. K551 participates in a covalent cross-link: Glycyl lysine isopeptide (Lys-Gly) (interchain with G-Cter in SUMO1); alternate. A Glycyl lysine isopeptide (Lys-Gly) (interchain with G-Cter in SUMO2); alternate cross-link involves residue K551. S563 and S566 each carry phosphoserine. K593 participates in a covalent cross-link: Glycyl lysine isopeptide (Lys-Gly) (interchain with G-Cter in SUMO2). The segment at 621-645 (HICHIPGCGKVYGKTSHLRAHLRWH) adopts a C2H2-type 1 zinc-finger fold. The residue at position 646 (S646) is a Phosphoserine. 2 consecutive C2H2-type zinc fingers follow at residues 651 to 675 (FVCNWMYCGKRFTRSDELQRHRRTH) and 681 to 703 (FVCPECSKRFMRSDHLAKHIKTH).

This sequence belongs to the Sp1 C2H2-type zinc-finger protein family. Interacts with HLTF; the interaction may be required for basal transcriptional activity of HLTF. Interacts with HDAC1; the interaction deacetylates SP3 and regulates its transcriptional activity. Interacts with HDAC2 (preferably the CK2-phosphorylated form); the interaction deacetylates SP3 and regulates its transcriptional activity. Interacts with MEIS2 isoform 4 and PBX1 isoform PBX1a. In terms of processing, not glycosylated. Post-translationally, acetylated by histone acetyltransferase p300, deacetylated by HDACs. Acetylation/deacetylation states regulate transcriptional activity. Acetylation appears to activate transcription. Alternate sumoylation and acetylation at Lys-551 also control transcriptional activity. Ceramides can also regulate acetylation/deacetylation events through altering the interaction of HDAC with SP3. In vitro, C(18)-ceramides, but not C(16)-ceramides, increase the interaction of HDAC1 with SP3 and enhance the deacetylation of SP3 and the subsequent repression of the TERT promoter. Sumoylated on all isoforms. Sumoylated on 2 sites in longer isoforms with Lys-551 being the major site. Sumoylation at this site promotes nuclear localization to the nuclear periphery, nuclear dots and PML nuclear bodies. Sumoylation on Lys-551 represses the transactivation activity, except for the largest isoform, L-Sp3, which has little effect on transactivation. Alternate sumoylation and acetylation at Lys-551 also control transcriptional activity. In terms of tissue distribution, ubiquitously expressed.

The protein localises to the nucleus. The protein resides in the PML body. Transcriptional factor that can act as an activator or repressor depending on isoform and/or post-translational modifications. Binds to GT and GC boxes promoter elements. Competes with SP1 for the GC-box promoters. Weak activator of transcription but can activate a number of genes involved in different processes such as cell-cycle regulation, hormone-induction and house-keeping. The polypeptide is Transcription factor Sp3 (SP3) (Homo sapiens (Human)).